Reading from the N-terminus, the 701-residue chain is Elongation factor G (701 aa).

The tr-type G domain maps to 10 to 290; that stretch reads AKVRNIGIMA…AVVDYLPSPL (281 aa). GTP is bound by residues 19–26, 83–87, and 137–140; these read AHIDAGKT, DTPGH, and NKMD.

This sequence belongs to the TRAFAC class translation factor GTPase superfamily. Classic translation factor GTPase family. EF-G/EF-2 subfamily.

It is found in the cytoplasm. Catalyzes the GTP-dependent ribosomal translocation step during translation elongation. During this step, the ribosome changes from the pre-translocational (PRE) to the post-translocational (POST) state as the newly formed A-site-bound peptidyl-tRNA and P-site-bound deacylated tRNA move to the P and E sites, respectively. Catalyzes the coordinated movement of the two tRNA molecules, the mRNA and conformational changes in the ribosome. This chain is Elongation factor G, found in Tropheryma whipplei (strain TW08/27) (Whipple's bacillus).